A 907-amino-acid chain; its full sequence is MLNLVQKIIGSRNDRFIKKVSKTVQKINSLEPEFEKLSDQELKAKTQEYKDRVAKGEALDNLLPEAFATVREAGKRTKNMRHYDVQLIGGIVLHQGKVAEMRTGEGKTLVATLPAYLNALTGNGVHVITVNDYLAKRDAELMSDIYEFLGLSVGVIVADLNPEQRRESYACDITYGTNNEFGFDYLRDNMAYDKEQQVQRSRNYVIIDEVDSILIDEARTPLIISGASDDSSEMYNLFNRLVPFLEKQEKEELDEDQEQKDFYVDEKSKNAYLTEKGYAKIESMLKKEGILEEDDNLYSPHNITKMHYLNACLRAHSLYQLNIDYIVRDQEIVIIDESTGRAMPGRRWSDGLHQAIEAKEGVKINAENQTMASITFQNFFKLYNKIAGMTGTADTEAFELHSIYGLEVIIIPTNKPLIRKDHHDEIYGSVREKFDAIVEDIKQRISKGQPVLVGTASIEASEVLSTLLKKKKIRHNVLNAKQHEKEASIIAMAGYPGNVTIATNMAGRGTDIILGGNLEVEIAQLEDPTPEEVAQIKAEWVKRNEVVKNAGGLCIIGSERHDSRRIDNQLRGRAARQGDPGESKFYLSMDDNLLRIFASQSMAERVKKGLKGGESLAFGFMSKVISKAQGKVESYHFDIRKNLLEYDNVVNTQRKVIYEQRQAFLDSDDVSEILADIRIDVAEQLFHDYVPAGSMHELWDLEGLEKALKSDFMIEIDLQKLYEEDDNLGEEDLKKFVREAIEFEFAEKTKNLEVGAVRQFEKFSLLQSLDSHWREHLSSIDHLRNSINLRGYAQKDPKNEYKKEAFELFSTMLDNFKYEVISSLAKIRIATEEETQRAQEEWKESMSEIKAEHESVIDNNQSEDDKEQEEAPKVQQVKREGPKIKRNDPCPCGSGKKYKQCHGKVVD.

ATP contacts are provided by residues Gln-86, Gly-104 to Thr-108, and Asp-511. Basic and acidic residues-rich tracts occupy residues Ala-838–Val-856 and Glu-869–Asp-888. The interval Ala-838 to Asp-907 is disordered. 4 residues coordinate Zn(2+): Cys-890, Cys-892, Cys-901, and His-902. Positions Lys-896 to Asp-907 are enriched in basic residues.

Belongs to the SecA family. In terms of assembly, monomer and homodimer. Part of the essential Sec protein translocation apparatus which comprises SecA, SecYEG and auxiliary proteins SecDF-YajC and YidC. Zn(2+) serves as cofactor.

The protein localises to the cell inner membrane. Its subcellular location is the cytoplasm. It catalyses the reaction ATP + H2O + cellular proteinSide 1 = ADP + phosphate + cellular proteinSide 2.. Its function is as follows. Part of the Sec protein translocase complex. Interacts with the SecYEG preprotein conducting channel. Has a central role in coupling the hydrolysis of ATP to the transfer of proteins into and across the cell membrane, serving both as a receptor for the preprotein-SecB complex and as an ATP-driven molecular motor driving the stepwise translocation of polypeptide chains across the membrane. This Francisella philomiragia subsp. philomiragia (strain ATCC 25017 / CCUG 19701 / FSC 153 / O#319-036) protein is Protein translocase subunit SecA.